Consider the following 93-residue polypeptide: Large ribosomal subunit protein eL42 (93 aa).

Residues cysteine 11, cysteine 14, cysteine 72, and cysteine 75 each coordinate Zn(2+). A C4-type zinc finger spans residues 11 to 75; that stretch reads CPHCHSHFEH…TDLKYRCSEC (65 aa).

This sequence belongs to the eukaryotic ribosomal protein eL42 family. As to quaternary structure, part of the 50S ribosomal subunit. Requires Zn(2+) as cofactor.

Its function is as follows. Binds to the 23S rRNA. The chain is Large ribosomal subunit protein eL42 (rpl44e) from Natronomonas pharaonis (strain ATCC 35678 / DSM 2160 / CIP 103997 / JCM 8858 / NBRC 14720 / NCIMB 2260 / Gabara) (Halobacterium pharaonis).